A 264-amino-acid polypeptide reads, in one-letter code: MKPTTIASLQKCKQDKKRFATITAYDYSFAKLFADEGLNVMLVGDSLGMTVQGHDSTLPVTVADIAYHTASVRRGAPNCLLLADLPFMAYATPEQAFENAATVMRAGANMVKIEGGEWLVETVKMLTERAVPVCGHLGLTPQSVNIFGGYKVQGRGDEAGDQLLSDALALEAAGAQLLVLECVPVELAKRITEALAIPVIGIGAGNVTDGQILVMHDAFGITGGHIPKFAKNFLAETGDIRAAVRQYMAEVESGVYPGEEHSFH.

Mg(2+) contacts are provided by aspartate 45 and aspartate 84. 3-methyl-2-oxobutanoate contacts are provided by residues 45-46, aspartate 84, and lysine 112; that span reads DS. Residue glutamate 114 coordinates Mg(2+). The active-site Proton acceptor is glutamate 181.

It belongs to the PanB family. As to quaternary structure, homodecamer; pentamer of dimers. The cofactor is Mg(2+).

It is found in the cytoplasm. The catalysed reaction is 3-methyl-2-oxobutanoate + (6R)-5,10-methylene-5,6,7,8-tetrahydrofolate + H2O = 2-dehydropantoate + (6S)-5,6,7,8-tetrahydrofolate. It functions in the pathway cofactor biosynthesis; (R)-pantothenate biosynthesis; (R)-pantoate from 3-methyl-2-oxobutanoate: step 1/2. In terms of biological role, catalyzes the reversible reaction in which hydroxymethyl group from 5,10-methylenetetrahydrofolate is transferred onto alpha-ketoisovalerate to form ketopantoate. The chain is 3-methyl-2-oxobutanoate hydroxymethyltransferase from Shigella boydii serotype 18 (strain CDC 3083-94 / BS512).